The following is a 30-amino-acid chain: Beta/omega-theraphotoxin-Tp2a (30 aa).

Intrachain disulfides connect Cys2–Cys16, Cys9–Cys21, and Cys15–Cys25. Positions 26-30 (KKKLW) are flexible tail region important for ability to inhibit Nav channel. Positions 29–30 (LW) are hydrophobic dyad that anchors the toxin into the membrane while positioning it over the S3 helix of Nav1.7/SCN9A.

It belongs to the neurotoxin 30 (phrixotoxin) family. In terms of tissue distribution, expressed by the venom gland.

Its subcellular location is the secreted. Its function is as follows. Gating-modifier toxin that targets voltage-gated sodium channels with a selective activity on Nav1.7/SCN9A (IC(50)=1-1.5 nM). It inhibits both activation and inactivation. For inhibition of activation, it is 100-fold more selective for Nav1.7/SCN9A (IC(50)=0.26-3) than for other sodium channels (Nav1.2/SCN2A (IC(50)=40-540 nM), Nav1.3/SCN3A (IC(50)=102 nM), Nav1.4/SCN4A (IC(50)=30-39 nM), Nav1.5/SCN5A (IC(50)=19-90 nM), Nav1.6/SCN8A (IC(50)=26 nM), and Nav1.8/SCN10A (IC(50)=146 nM)). For inhibition of inactivation, it is 20-fold more potent in inhibiting inactivation on Nav1.7/SCN9A (IC(50)=250 nM) than other channels (about 4.6 uM for all channels). It also weakly inhibits Cav1.2/CACNA1C and Cav3.2/CACNA1H (29% block at 1 uM). It inhibits Nav1.7/SCN9A activation by interacting with DII and impairs Nav1.7/SCN9A inactivation by interacting with DIV. It docks on top of the DII S3 helix Nav1.7/SCN9A. It is about 60-fold less active on Nav1.7/SCN9A at depolarized potential (0 mV; IC(50)=15 nM), compared to -120 mV potential (IC(50)=0.26 nM). This toxin binds to lipid membrane. This ability correlates with hNav1.7/SCN9A inhibition, showing that membrane binding is the first step in the inhibitory mechanism of this toxin. It inhibits Nav1.2/SCN2A less potently when it is coexpressed with SCN2B or SCN4B than when it is expressed alone, showing that beta subunits (SCN2B and SCN4B) have a protective effect. This is Beta/omega-theraphotoxin-Tp2a from Thrixopelma pruriens (Peruvian green velvet tarantula).